A 171-amino-acid chain; its full sequence is Calcium channel flower homolog (171 aa).

Residues 1–31 (MSGSVAAGAAAGPVPPAQEEGMTWWYRWLCR) are Cytoplasmic-facing. A helical membrane pass occupies residues 32-52 (LAGVLGAVSCAISGLFNCVTI). Residues 53-56 (HPLN) are Extracellular-facing. A helical membrane pass occupies residues 57–77 (IAAGVWMIMNAFILLLCEAPF). Residues 78–101 (CCQFVEFANTVAEKVDRLRSWQKA) are Cytoplasmic-facing. Residues 102-122 (VFYCGMAIVPIVMSLTLTTLL) form a helical membrane-spanning segment. Residues 123–124 (GN) are Extracellular-facing. Residues 125 to 141 (AIAFATGVLYGLSALGK) traverse the membrane as a helical segment. Residues 142 to 171 (KGDAISYARIQQQRQQADEEKLAETFEGEL) are Cytoplasmic-facing.

Belongs to the calcium channel flower family. As to quaternary structure, interacts with adaptor protein complex 2 (AP-2). As to expression, expressed in calyces in the brain (at protein level). Detected in cultured hippocampal neurons (at protein level).

The protein resides in the cell membrane. The protein localises to the cytoplasmic vesicle. It is found in the secretory vesicle. It localises to the synaptic vesicle. Its subcellular location is the golgi apparatus. The protein resides in the vesicle. Its function is as follows. Transmembrane protein which mediates synaptic endocytosis and fitness-based cell culling. In response to different stimulus strengths, controls two major modes of synaptic vesicle (SV) retrieval in hippocampal neurons; Clathrin-mediated endocytosis (CME) in response to mild stimulation and activity-dependent bulk endocytosis (ADBE) in response to strong stimulation. In cytotoxic T-lymphoocytes (CTLs) facilitates calcium-dependent endocytosis of cytotoxic granules (CGs) at the immuno synapse. Different isoforms work as fitness fingerprints in 'loser' and 'winner' cells and thereby mediate win/lose decisions as part of the cell competition process. The sequence is that of Calcium channel flower homolog (Cacfd1) from Rattus norvegicus (Rat).